Consider the following 212-residue polypeptide: Deoxyribose-phosphate aldolase (212 aa).

Asp89 acts as the Proton donor/acceptor in catalysis. The active-site Schiff-base intermediate with acetaldehyde is Lys151. The active-site Proton donor/acceptor is the Lys180.

The protein belongs to the DeoC/FbaB aldolase family. DeoC type 1 subfamily.

The protein localises to the cytoplasm. The enzyme catalyses 2-deoxy-D-ribose 5-phosphate = D-glyceraldehyde 3-phosphate + acetaldehyde. It participates in carbohydrate degradation; 2-deoxy-D-ribose 1-phosphate degradation; D-glyceraldehyde 3-phosphate and acetaldehyde from 2-deoxy-alpha-D-ribose 1-phosphate: step 2/2. Catalyzes a reversible aldol reaction between acetaldehyde and D-glyceraldehyde 3-phosphate to generate 2-deoxy-D-ribose 5-phosphate. The protein is Deoxyribose-phosphate aldolase of Clostridium botulinum (strain Okra / Type B1).